The primary structure comprises 111 residues: MGSRTLLGHLSVLAVVLLLLLQGTQSVDIKYQGYQVQLESVKKLKALEEQWVSSPRLQAQDPQPAVCHHPALPLDLQPICTSQEAASILQALRTMDNDECELCVNIACTGC.

Residues 1 to 26 (MGSRTLLGHLSVLAVVLLLLLQGTQS) form the signal peptide. Residues 27-96 (VDIKYQGYQV…SILQALRTMD (70 aa)) constitute a propeptide that is removed on maturation. 3 disulfide bridges follow: cysteine 67–cysteine 80, cysteine 100–cysteine 108, and cysteine 103–cysteine 111.

This sequence belongs to the guanylin family.

It localises to the secreted. Endogenous activator of intestinal guanylate cyclase. It stimulates this enzyme through the same receptor binding region as the heat-stable enterotoxins. May be a potent physiological regulator of intestinal fluid and electrolyte transport. May be an autocrine/paracrine regulator of intestinal salt and water transport. This is Guanylate cyclase activator 2B (GUCA2B) from Cavia porcellus (Guinea pig).